Reading from the N-terminus, the 670-residue chain is Probable leucine-rich repeat receptor-like protein kinase At1g68400 (670 aa).

Residues 1 to 29 form the signal peptide; that stretch reads MAKSSFFNKHLLLSLLILLQSCLLSSSSS. Residues 30–274 lie on the Extracellular side of the membrane; that stretch reads TDSETLLNFK…KSNNTSRIST (245 aa). Residues asparagine 52, asparagine 79, asparagine 102, asparagine 109, and asparagine 112 are each glycosylated (N-linked (GlcNAc...) asparagine). LRR repeat units follow at residues 69–91, 92–114, 115–137, 139–162, 163–185, and 186–207; these read RVTR…TSLT, SLRV…SNLT, ALKL…ITSL, RLYR…TDLT, HLLT…NLSD, and LQDF…LSQF. Residues asparagine 149, asparagine 182, and asparagine 190 are each glycosylated (N-linked (GlcNAc...) asparagine). The interval 230–266 is disordered; sequence SSDPTKPGRPDEAKASPLNKPETVPSSPTSIHGGDKS. Positions 253–266 are enriched in polar residues; the sequence is VPSSPTSIHGGDKS. N-linked (GlcNAc...) asparagine glycosylation is present at asparagine 268. Residues 275–295 form a helical membrane-spanning segment; the sequence is ISLIAIILGDFIILSFVSLLL. At 296–670 the chain is on the cytoplasmic side; the sequence is YYCFWRQYAV…EDTCGGTTSQ (375 aa). In terms of domain architecture, Protein kinase spans 362–636; it reads RASAEMLGKG…GHVVKLIEDI (275 aa). Serine 364 is modified (phosphoserine). ATP contacts are provided by residues 368–376 and lysine 390; that span reads LGKGGFGTA. Serine 443 bears the Phosphoserine mark. Phosphothreonine is present on threonine 463. Residue aspartate 491 is the Proton acceptor of the active site. Phosphothreonine is present on threonine 616.

It belongs to the protein kinase superfamily. Ser/Thr protein kinase family.

The protein resides in the cell membrane. The enzyme catalyses L-seryl-[protein] + ATP = O-phospho-L-seryl-[protein] + ADP + H(+). It catalyses the reaction L-threonyl-[protein] + ATP = O-phospho-L-threonyl-[protein] + ADP + H(+). The sequence is that of Probable leucine-rich repeat receptor-like protein kinase At1g68400 from Arabidopsis thaliana (Mouse-ear cress).